Here is a 106-residue protein sequence, read N- to C-terminus: NADH dehydrogenase [ubiquinone] 1 alpha subcomplex subunit 8-B (106 aa).

Serine 2 bears the N-acetylserine mark. 2 CHCH domains span residues 26–67 (GMRC…LKDL) and 68–106 (HQKC…CPLK). 3 consecutive short sequence motifs (cx9C motif) follow at residues 29 to 39 (CMPENVAFLKC), 49 to 59 (CLDKGRDVTRC), and 71 to 81 (CQKEMDDYVGC). 4 disulfides stabilise this stretch: cysteine 29–cysteine 59, cysteine 39–cysteine 49, cysteine 71–cysteine 103, and cysteine 81–cysteine 92. A Cx10C motif motif is present at residues 92–103 (CRKEQEAFEKVC).

Belongs to the complex I NDUFA8 subunit family. As to quaternary structure, complex I is composed of at least 49 different subunits.

The protein resides in the mitochondrion. It localises to the mitochondrion intermembrane space. Accessory subunit of the mitochondrial membrane respiratory chain NADH dehydrogenase (Complex I), that is believed not to be involved in catalysis. Complex I functions in the transfer of electrons from NADH to the respiratory chain. The immediate electron acceptor for the enzyme is believed to be ubiquinone. This is NADH dehydrogenase [ubiquinone] 1 alpha subcomplex subunit 8-B from Arabidopsis thaliana (Mouse-ear cress).